The sequence spans 313 residues: MLTTQSLVERFKLEVITGEAGLNKQIKNTDISRPGLEMAGYFSHYASDRIQLLGTTELSFYNLLPDEERKGRMRKLCRPETPAIIVTRDLEPPEELIEAAKENETPLITSTIATTQLMSRLTTFLEHELARTTSLHGVLVDVYGVGVLITGDSGIGKSETALELIKRGHRLVADDNVEIREISKDELTGRAPKLIEHLLEIRGLGIINVMTLFGAGSILTEKRLRLNIHLENWHKEKLYDRVGLNEETLRILDTEITKKTIPVRPGRNVAVIIEVAAMNYRLNIMGINTAEEFNERLNAEILRNGNHSEGNNQ.

Catalysis depends on residues H136 and K157. An ATP-binding site is contributed by 151 to 158; sequence GDSGIGKS. Position 158 (S158) interacts with Mg(2+). D175 functions as the Proton acceptor; for phosphorylation activity. Proton donor; for dephosphorylation activity in the catalytic mechanism. Residues 199 to 208 are important for the catalytic mechanism of both phosphorylation and dephosphorylation; sequence LEIRGLGIIN. Mg(2+) is bound at residue E200. Residue R241 is part of the active site. Positions 262–267 are important for the catalytic mechanism of dephosphorylation; it reads PVRPGR.

This sequence belongs to the HPrK/P family. As to quaternary structure, homohexamer. Requires Mg(2+) as cofactor.

It catalyses the reaction [HPr protein]-L-serine + ATP = [HPr protein]-O-phospho-L-serine + ADP + H(+). The enzyme catalyses [HPr protein]-O-phospho-L-serine + phosphate + H(+) = [HPr protein]-L-serine + diphosphate. In terms of biological role, catalyzes the ATP- as well as the pyrophosphate-dependent phosphorylation of a specific serine residue in HPr, a phosphocarrier protein of the phosphoenolpyruvate-dependent sugar phosphotransferase system (PTS). HprK/P also catalyzes the pyrophosphate-producing, inorganic phosphate-dependent dephosphorylation (phosphorolysis) of seryl-phosphorylated HPr (P-Ser-HPr). The two antagonistic activities of HprK/P are regulated by several intracellular metabolites, which change their concentration in response to the absence or presence of rapidly metabolisable carbon sources (glucose, fructose, etc.) in the growth medium. Therefore, by controlling the phosphorylation state of HPr, HPrK/P is a sensor enzyme that plays a major role in the regulation of carbon metabolism and sugar transport: it mediates carbon catabolite repression (CCR), and regulates PTS-catalyzed carbohydrate uptake and inducer exclusion. The protein is HPr kinase/phosphorylase of Staphylococcus saprophyticus subsp. saprophyticus (strain ATCC 15305 / DSM 20229 / NCIMB 8711 / NCTC 7292 / S-41).